We begin with the raw amino-acid sequence, 609 residues long: MKMIQRPLNWLVLAGAATGFPLYAAQMVTIDDASMVEQALAQQQYSMMPAASGFKAVNTVQLPNGKVKVRYQQMYNGVPVYGTVVVATESSKGISQVYGQMAQQLEADLPTVTPDIESQQAIALAVSHFGEQHAGESLPVENESVQLMVRLDDNQQAQLVYLVDFFVASETPSRPFYFISAETGEVLDQWDGINHAQATGTGPGGNQKTGRYEYGSNGLPGFTIDKTGTTCTMNNSAVKTVNLNGGTSGSTAFSYACNNSTNYNSVKTVNGAYSPLNDAHFFGKVVFDMYQQWLNTSPLTFQLTMRVHYGNNYENAFWDGRAMTFGDGYTRFYPLVDINVSAHEVSHGFTEQNSGLVYRDMSGGINEAFSDIAGEAAEYFMRGNVDWIVGADIFKSSGGLRYFDQPSRDGRSIDHASQYYSGIDVHHSSGVFNRAFYLLANKSGWNVRKGFEVFAVANQLYWTPNSTFDQGGCGVVKAAQDLNYNTADVVAAFNTVGVNASCGTTPPPVGKVLEKGKPITGLSGSRGGEDFYTFTVTNSGSVVVSISGGTGDADLYVKAGSKPTTSSWDCRPYRSGNAEQCSISAVVGTTYHVMLRGYSNYSGVTLRLD.

The N-terminal stretch at 1 to 24 is a signal peptide; sequence MKMIQRPLNWLVLAGAATGFPLYA. Residues 25–196 constitute a propeptide that is removed on maturation; it reads AQMVTIDDAS…LDQWDGINHA (172 aa). Residue His-343 coordinates Zn(2+). Glu-344 is an active-site residue. Zn(2+)-binding residues include His-347 and Glu-367. His-426 acts as the Proton donor in catalysis.

Belongs to the peptidase M4 family. Requires Zn(2+) as cofactor.

It localises to the secreted. Functionally, may play a role in the pathogenesis of cholera. Hap nicks and activates the A subunit of cholera enterotoxin and related enterotoxins. This Vibrio cholerae serotype O1 (strain ATCC 39315 / El Tor Inaba N16961) protein is Hemagglutinin/proteinase (hap).